A 207-amino-acid chain; its full sequence is Cytochrome c biogenesis ATP-binding export protein CcmA (207 aa).

Positions 3–206 (LMAEGLSARR…AKSLEMTGFV (204 aa)) constitute an ABC transporter domain. Position 35–42 (35–42 (GPNGAGKS)) interacts with ATP.

This sequence belongs to the ABC transporter superfamily. CcmA exporter (TC 3.A.1.107) family. As to quaternary structure, the complex is composed of two ATP-binding proteins (CcmA) and two transmembrane proteins (CcmB).

It localises to the cell inner membrane. It catalyses the reaction heme b(in) + ATP + H2O = heme b(out) + ADP + phosphate + H(+). Its function is as follows. Part of the ABC transporter complex CcmAB involved in the biogenesis of c-type cytochromes; once thought to export heme, this seems not to be the case, but its exact role is uncertain. Responsible for energy coupling to the transport system. This chain is Cytochrome c biogenesis ATP-binding export protein CcmA, found in Rhizobium meliloti (strain 1021) (Ensifer meliloti).